Reading from the N-terminus, the 509-residue chain is UDP-N-acetylmuramoyl-L-alanyl-D-glutamate--2,6-diaminopimelate ligase (509 aa).

Serine 30 provides a ligand contact to UDP-N-acetyl-alpha-D-muramoyl-L-alanyl-D-glutamate. ATP is bound at residue 110 to 116 (GTNGKTT). UDP-N-acetyl-alpha-D-muramoyl-L-alanyl-D-glutamate contacts are provided by residues 152–153 (TT), serine 179, glutamine 185, and arginine 187. Lysine 219 carries the post-translational modification N6-carboxylysine. Meso-2,6-diaminopimelate-binding positions include arginine 385, 409 to 412 (DNPR), glycine 476, and glutamate 480. The Meso-diaminopimelate recognition motif signature appears at 409–412 (DNPR).

The protein belongs to the MurCDEF family. MurE subfamily. Mg(2+) serves as cofactor. In terms of processing, carboxylation is probably crucial for Mg(2+) binding and, consequently, for the gamma-phosphate positioning of ATP.

Its subcellular location is the cytoplasm. It catalyses the reaction UDP-N-acetyl-alpha-D-muramoyl-L-alanyl-D-glutamate + meso-2,6-diaminopimelate + ATP = UDP-N-acetyl-alpha-D-muramoyl-L-alanyl-gamma-D-glutamyl-meso-2,6-diaminopimelate + ADP + phosphate + H(+). Its pathway is cell wall biogenesis; peptidoglycan biosynthesis. Catalyzes the addition of meso-diaminopimelic acid to the nucleotide precursor UDP-N-acetylmuramoyl-L-alanyl-D-glutamate (UMAG) in the biosynthesis of bacterial cell-wall peptidoglycan. In Geobacter sulfurreducens (strain ATCC 51573 / DSM 12127 / PCA), this protein is UDP-N-acetylmuramoyl-L-alanyl-D-glutamate--2,6-diaminopimelate ligase.